We begin with the raw amino-acid sequence, 240 residues long: Serine protease SplB (240 aa).

The first 36 residues, 1 to 36, serve as a signal peptide directing secretion; the sequence is MNKNVVIKSLAALTILTSVTGIGITLVEEVQQTAKA. Catalysis depends on charge relay system residues histidine 75, aspartate 113, and serine 193.

It belongs to the peptidase S1B family.

Its subcellular location is the secreted. Its function is as follows. Serine protease that cleaves specifically after the sequence Trp-Glu-Leu-Gln. The sequence is that of Serine protease SplB (splB) from Staphylococcus aureus (strain MW2).